A 302-amino-acid chain; its full sequence is tRNA-cytidine(32) 2-sulfurtransferase (302 aa).

The PP-loop motif signature appears at Ser44 to Ser49. [4Fe-4S] cluster-binding residues include Cys119, Cys122, and Cys210.

Belongs to the TtcA family. Homodimer. The cofactor is Mg(2+). It depends on [4Fe-4S] cluster as a cofactor.

It is found in the cytoplasm. It catalyses the reaction cytidine(32) in tRNA + S-sulfanyl-L-cysteinyl-[cysteine desulfurase] + AH2 + ATP = 2-thiocytidine(32) in tRNA + L-cysteinyl-[cysteine desulfurase] + A + AMP + diphosphate + H(+). Its pathway is tRNA modification. Catalyzes the ATP-dependent 2-thiolation of cytidine in position 32 of tRNA, to form 2-thiocytidine (s(2)C32). The sulfur atoms are provided by the cysteine/cysteine desulfurase (IscS) system. In Teredinibacter turnerae (strain ATCC 39867 / T7901), this protein is tRNA-cytidine(32) 2-sulfurtransferase.